The sequence spans 340 residues: Nuclear hormone receptor family member nhr-268 (340 aa).

The segment at residues 1-75 (MNCLVCSARA…IGMKAASKND (75 aa)) is a DNA-binding region (nuclear receptor). NR C4-type zinc fingers lie at residues 3–23 (CLVC…CFAC) and 39–58 (CKYF…CRAC). One can recognise an NR LBD domain in the interval 98–337 (KNDKNYSNFI…KRLMQDIFSH (240 aa)).

This sequence belongs to the nuclear hormone receptor family.

The protein localises to the nucleus. In terms of biological role, orphan nuclear receptor. The chain is Nuclear hormone receptor family member nhr-268 (nhr-268) from Caenorhabditis elegans.